Here is a 438-residue protein sequence, read N- to C-terminus: Adenylosuccinate synthetase (438 aa).

GTP-binding positions include 13–19 (GDEGKGK) and 41–43 (GHT). Asp14 acts as the Proton acceptor in catalysis. Asp14 and Gly41 together coordinate Mg(2+). IMP is bound by residues 14–17 (DEGK), 39–42 (NAGH), Thr130, Arg144, Gln225, Thr240, and Arg310. His42 acts as the Proton donor in catalysis. Substrate is bound at residue 306–312 (ATTGRLR). Residues Arg312, 338 to 340 (KLD), and 421 to 423 (STG) contribute to the GTP site.

It belongs to the adenylosuccinate synthetase family. In terms of assembly, homodimer. The cofactor is Mg(2+).

Its subcellular location is the cytoplasm. The catalysed reaction is IMP + L-aspartate + GTP = N(6)-(1,2-dicarboxyethyl)-AMP + GDP + phosphate + 2 H(+). Its pathway is purine metabolism; AMP biosynthesis via de novo pathway; AMP from IMP: step 1/2. Plays an important role in the de novo pathway of purine nucleotide biosynthesis. Catalyzes the first committed step in the biosynthesis of AMP from IMP. This is Adenylosuccinate synthetase from Vibrio vulnificus (strain YJ016).